We begin with the raw amino-acid sequence, 123 residues long: Steroid Delta-isomerase (123 aa).

Catalysis depends on tyrosine 12, which acts as the Proton donor. Aspartate 36 (proton acceptor) is an active-site residue. Aspartate 96 lines the substrate pocket.

In terms of assembly, homodimer.

The enzyme catalyses a 3-oxo-Delta(5)-steroid = a 3-oxo-Delta(4)-steroid. The chain is Steroid Delta-isomerase (ksdI) from Nocardioides simplex (Arthrobacter simplex).